Reading from the N-terminus, the 118-residue chain is uncharacterized protein (118 aa).

A helical membrane pass occupies residues 41-61 (IFLLIIITIIFALTMYTSVQV).

The protein resides in the host membrane. This is an uncharacterized protein from Ostreid herpesvirus 1 (isolate France) (OsHV-1).